Consider the following 1121-residue polypeptide: Piwi-like protein ergo-1 (1121 aa).

Residues 1-14 are compositionally biased toward gly residues; sequence MSYNNGGGGGGGGY. The disordered stretch occupies residues 1–134; sequence MSYNNGGGGG…GNRGGGGGRV (134 aa). Composition is skewed to basic and acidic residues over residues 15–29 and 40–77; these read RNDR…DRQN and YNDD…DRRG. Residues 99–112 are compositionally biased toward polar residues; it reads GSNQRNDNYGNNRG. The span at 125 to 134 shows a compositional bias: gly residues; sequence GNRGGGGGRV. The 109-residue stretch at 426 to 534 folds into the PAZ domain; the sequence is VMTQILTKMT…MPLELVSYIV (109 aa). A Piwi domain is found at 774–1081; it reads NVLKYLADNK…AAKRAKETLD (308 aa).

The protein belongs to the argonaute family. Piwi subfamily. As to quaternary structure, interacts with rde-12. Interacts with rde-10. In terms of tissue distribution, highly expressed in the germline in hermaphrodites.

It is found in the cytoplasm. Its function is as follows. Argonaute protein required for gene silencing in the endogenous RNA interference (RNAi) pathway. Involved in the 26G RNAi pathway and associates with both unmethylated and methylated 26G small interfering RNAs (26G-siRNAs), which are a class of 26 nucleotide siRNAs that possess a guanine residue at the 5'-end. Associated 26G-siRNAs are methylated by the methyltransferase henn-1, which stabilizes the siRNAs. Association with 26G-siRNAs is required for the biogenesis of secondary 22G-siRNAs (a class of 22 nucleotide siRNAs that possess a triphosphorylated guanine residue at the 5'-end). May be involved in passenger strand cleavage of target 26G-siRNAs. This Caenorhabditis elegans protein is Piwi-like protein ergo-1.